The primary structure comprises 160 residues: Anaerobic nitrite reductase MHB1 (160 aa).

The 150-residue stretch at 8–157 (GFTEEQEALV…LVNAIKSEMK (150 aa)) folds into the Globin domain. Positions 41–45 (EIAPS) match the Homodimerization motif. Heme b-binding residues include S51, K65, H69, K99, and H104. A Homodimerization motif is present at residues 111–123 (DEHFEVTKFALLE).

It belongs to the plant globin family. As to quaternary structure, homodimer. The cofactor is heme b. As to expression, root specific.

Its subcellular location is the nucleus matrix. The protein resides in the cytoplasm. It carries out the reaction Fe(III)-heme b-[protein] + nitric oxide + H2O = Fe(II)-heme b-[protein] + nitrite + 2 H(+). Its function is as follows. Phytoglobin that reduces nitrite to nitric oxide (NO) under anoxic conditions (e.g. during flooding or in waterlogged soil) and upon root nodulation. Required for general plant development and during nodulation, especially for the onset of symbiosis. Monitors nitric oxide (NO) levels during early phase of the nitrogen-fixing symbiosis and buffers oxygen in functioning nodules. May not function as an oxygen storage or transport protein. Has an unusually high affinity for O(2) through a hexacoordinate heme iron because of a very low dissociation constant. The protein is Anaerobic nitrite reductase MHB1 of Medicago sativa (Alfalfa).